Reading from the N-terminus, the 136-residue chain is Holo-[acyl-carrier-protein] synthase (136 aa).

2 residues coordinate Mg(2+): Asp8 and Glu62.

The protein belongs to the P-Pant transferase superfamily. AcpS family. Mg(2+) serves as cofactor.

It localises to the cytoplasm. It carries out the reaction apo-[ACP] + CoA = holo-[ACP] + adenosine 3',5'-bisphosphate + H(+). Its function is as follows. Transfers the 4'-phosphopantetheine moiety from coenzyme A to a Ser of acyl-carrier-protein. This Polynucleobacter necessarius subsp. necessarius (strain STIR1) protein is Holo-[acyl-carrier-protein] synthase.